The following is a 41-amino-acid chain: MKIKNSLKALRERHRNNRLVRRKGRVYILNKTNPRFRARQG.

It belongs to the bacterial ribosomal protein bL36 family.

In Bartonella henselae (strain ATCC 49882 / DSM 28221 / CCUG 30454 / Houston 1) (Rochalimaea henselae), this protein is Large ribosomal subunit protein bL36.